The sequence spans 275 residues: Bis(5'-nucleosyl)-tetraphosphatase, symmetrical (275 aa).

The protein belongs to the Ap4A hydrolase family.

The catalysed reaction is P(1),P(4)-bis(5'-adenosyl) tetraphosphate + H2O = 2 ADP + 2 H(+). Its function is as follows. Hydrolyzes diadenosine 5',5'''-P1,P4-tetraphosphate to yield ADP. This Photorhabdus laumondii subsp. laumondii (strain DSM 15139 / CIP 105565 / TT01) (Photorhabdus luminescens subsp. laumondii) protein is Bis(5'-nucleosyl)-tetraphosphatase, symmetrical.